The following is a 591-amino-acid chain: Lipoprotein LpqB (591 aa).

Residues 1–20 (MTLRPSRRAVLSAAAVLLTG) form the signal peptide. Residue Cys-21 is the site of N-palmitoyl cysteine attachment. Residue Cys-21 is the site of S-diacylglycerol cysteine attachment.

It belongs to the LpqB lipoprotein family.

It localises to the cell membrane. In Cutibacterium acnes (strain DSM 16379 / KPA171202) (Propionibacterium acnes), this protein is Lipoprotein LpqB.